Consider the following 444-residue polypeptide: ATP-dependent protease ATPase subunit HslU (444 aa).

Residues isoleucine 18, 60-65, aspartate 256, glutamate 322, and arginine 394 contribute to the ATP site; that span reads GVGKTE.

This sequence belongs to the ClpX chaperone family. HslU subfamily. In terms of assembly, a double ring-shaped homohexamer of HslV is capped on each side by a ring-shaped HslU homohexamer. The assembly of the HslU/HslV complex is dependent on binding of ATP.

Its subcellular location is the cytoplasm. ATPase subunit of a proteasome-like degradation complex; this subunit has chaperone activity. The binding of ATP and its subsequent hydrolysis by HslU are essential for unfolding of protein substrates subsequently hydrolyzed by HslV. HslU recognizes the N-terminal part of its protein substrates and unfolds these before they are guided to HslV for hydrolysis. In Klebsiella pneumoniae subsp. pneumoniae (strain ATCC 700721 / MGH 78578), this protein is ATP-dependent protease ATPase subunit HslU.